Here is a 319-residue protein sequence, read N- to C-terminus: Vesicle-associated membrane protein-associated protein scs22 (319 aa).

In terms of domain architecture, MSP spans 1–121 (MALECDSTIV…SERKIRCVYS (121 aa)). Residues 1-298 (MALECDSTIV…GAKVVPQIHN (298 aa)) lie on the Cytoplasmic side of the membrane. A compositionally biased stretch (low complexity) spans 127–150 (ANAHANAHHQPAQTTTTSIPTSAT). Residues 127–244 (ANAHANAHHQ…TTSPNNENNA (118 aa)) are disordered. Polar residues-rich tracts occupy residues 151–165 (DNYTTVNGNVNQSYS), 185–201 (STATTQHTQLPKTSAVS), and 231–244 (SVPTTTSPNNENNA). Thr-236 is subject to Phosphothreonine. 2 positions are modified to phosphoserine: Ser-237 and Ser-281. A helical; Anchor for type IV membrane protein membrane pass occupies residues 299–319 (TVTVQTAFLLAIICFLIGLLF).

It belongs to the VAMP-associated protein (VAP) (TC 9.B.17) family. In terms of assembly, interacts with epr1.

It is found in the endoplasmic reticulum membrane. In terms of biological role, vesicle-associated membrane protein-associated protein (VAP) implicated in maintaining the cortical endoplasmic reticulum (ER)-plasma membrane (PM) attachment. ER-PM contacts function to modulate the distribution of contractile ring components to ensure robust ring assembly. ER-PM contacts function also in controlling exocytosis and maintenance of cell polarity regulating cell shape. VAPs play an important role in regulating eisosome assembly. VAPs also contribute to ER-phagy by tethering atg8 to the ER membrane, but also by maintaining the ER-plasma membrane contact. In Schizosaccharomyces pombe (strain 972 / ATCC 24843) (Fission yeast), this protein is Vesicle-associated membrane protein-associated protein scs22 (scs22).